Consider the following 401-residue polypeptide: MNNLLCCALVFLDISIKWTTQETFPPKYLHYDEETSHQLLCDKCPPGTYLKQHCTAKWKTVCAPCPDHYYTDSWHTSDECLYCSPVCKELQYVKQECNRTHNRVCECKEGRYLEIEFCLKHRSCPPGFGVVQAGTPERNTVCKRCPDGFFSNETSSKAPCRKHTNCSVFGLLLTQKGNATHDNICSGNSESTQKCGIDVTLCEEAFFRFAVPTKFTPNWLSVLVDNLPGTKVNAESVERIKRQHSSQEQTFQLLKLWKHQNKDQDIVKKIIQDIDLCENSVQRHIGHANLTFEQLRSLMESLPGKKVGAEDIEKTIKACKPSDQILKLLSLWRIKNGDQDTLKGLMHALKHSKTYHFPKTVTQSLKKTIRFLHSFTMYKLYQKLFLEMIGNQVQSVKISCL.

A signal peptide spans 1 to 21 (MNNLLCCALVFLDISIKWTTQ). 4 TNFR-Cys repeats span residues 24 to 62 (FPPK…KTVC), 65 to 105 (CPDH…NRVC), 107 to 142 (CKEG…NTVC), and 145 to 185 (CPDG…DNIC). 8 cysteine pairs are disulfide-bonded: C41–C54, C44–C62, C65–C80, C83–C97, C87–C105, C107–C118, C124–C142, and C145–C160. Residue N98 is glycosylated (N-linked (GlcNAc...) asparagine). Residues N152, N165, and N178 are each glycosylated (N-linked (GlcNAc...) asparagine). C166 and C185 are joined by a disulfide. Death domains are found at residues 198-269 (DVTL…IVKK) and 270-365 (IIQD…TQSL). N289 carries N-linked (GlcNAc...) asparagine glycosylation.

Homodimer. Interacts with TNFSF10 and TNFSF11. N-glycosylated. Contains sialic acid residues. Post-translationally, the N-terminus is blocked. As to expression, highly expressed in adult lung, heart, kidney, liver, spleen, thymus, prostate, ovary, small intestine, thyroid, lymph node, trachea, adrenal gland, testis, and bone marrow. Detected at very low levels in brain, placenta and skeletal muscle. Highly expressed in fetal kidney, liver and lung.

Its subcellular location is the secreted. Its function is as follows. Acts as a decoy receptor for TNFSF11/RANKL and thereby neutralizes its function in osteoclastogenesis. Inhibits the activation of osteoclasts and promotes osteoclast apoptosis in vitro. Bone homeostasis seems to depend on the local ratio between TNFSF11 and TNFRSF11B. May also play a role in preventing arterial calcification. May act as decoy receptor for TNFSF10/TRAIL and protect against apoptosis. TNFSF10/TRAIL binding blocks the inhibition of osteoclastogenesis. The polypeptide is Tumor necrosis factor receptor superfamily member 11B (TNFRSF11B) (Homo sapiens (Human)).